Reading from the N-terminus, the 446-residue chain is Chromosomal replication initiator protein DnaA (446 aa).

The interval 1 to 81 (MENISDLWNS…AKLAIRFIIP (81 aa)) is domain I, interacts with DnaA modulators. The tract at residues 81-109 (PQSQAEEDIDLPSVKQKHAHDESNHLPQS) is domain II. The segment at 110 to 326 (MLNPKYTFDT…GALIRVVAYS (217 aa)) is domain III, AAA+ region. ATP contacts are provided by glycine 154, glycine 156, lysine 157, and threonine 158. Residues 327-446 (SLINKDMNAD…HVEEVKDILK (120 aa)) are domain IV, binds dsDNA.

Belongs to the DnaA family. In terms of assembly, oligomerizes as a right-handed, spiral filament on DNA at oriC.

It is found in the cytoplasm. In terms of biological role, plays an essential role in the initiation and regulation of chromosomal replication. ATP-DnaA binds to the origin of replication (oriC) to initiate formation of the DNA replication initiation complex once per cell cycle. Binds the DnaA box (a 9 base pair repeat at the origin) and separates the double-stranded (ds)DNA. Forms a right-handed helical filament on oriC DNA; dsDNA binds to the exterior of the filament while single-stranded (ss)DNA is stabiized in the filament's interior. The ATP-DnaA-oriC complex binds and stabilizes one strand of the AT-rich DNA unwinding element (DUE), permitting loading of DNA polymerase. After initiation quickly degrades to an ADP-DnaA complex that is not apt for DNA replication. Binds acidic phospholipids. The sequence is that of Chromosomal replication initiator protein DnaA from Bacillus mycoides (strain KBAB4) (Bacillus weihenstephanensis).